Consider the following 410-residue polypeptide: Chaperonin GroEL (410 aa).

Residues 29-32 (TAGP), Lys50, and 86-90 (DGTTT) contribute to the ATP site.

It belongs to the chaperonin (HSP60) family. In terms of assembly, forms a cylinder of 14 subunits composed of two heptameric rings stacked back-to-back. Interacts with the co-chaperonin GroES.

The protein localises to the cytoplasm. It catalyses the reaction ATP + H2O + a folded polypeptide = ADP + phosphate + an unfolded polypeptide.. In terms of biological role, together with its co-chaperonin GroES, plays an essential role in assisting protein folding. The GroEL-GroES system forms a nano-cage that allows encapsulation of the non-native substrate proteins and provides a physical environment optimized to promote and accelerate protein folding. This chain is Chaperonin GroEL, found in Ehrlichia canis.